A 112-amino-acid polypeptide reads, in one-letter code: Macrodomain Ori protein (112 aa).

A disordered region spans residues 91 to 112 (FHTLSGGKPQVEGAEDYTDSDD). The segment covering 103-112 (GAEDYTDSDD) has biased composition (acidic residues).

This sequence belongs to the MaoP family.

Involved in the organization of the Ori region of the chromosome into a macrodomain (MD). It constrains DNA mobility in the Ori macrodomain and limits long-distance DNA interactions with other chromosomal regions. The sequence is that of Macrodomain Ori protein from Escherichia coli O157:H7.